We begin with the raw amino-acid sequence, 203 residues long: FMN-dependent NADH:quinone oxidoreductase (203 aa).

FMN is bound by residues Ser-9, 15-17 (SVS), and 138-141 (SRGG).

The protein belongs to the azoreductase type 1 family. In terms of assembly, homodimer. FMN is required as a cofactor.

It catalyses the reaction 2 a quinone + NADH + H(+) = 2 a 1,4-benzosemiquinone + NAD(+). The enzyme catalyses N,N-dimethyl-1,4-phenylenediamine + anthranilate + 2 NAD(+) = 2-(4-dimethylaminophenyl)diazenylbenzoate + 2 NADH + 2 H(+). Functionally, quinone reductase that provides resistance to thiol-specific stress caused by electrophilic quinones. In terms of biological role, also exhibits azoreductase activity. Catalyzes the reductive cleavage of the azo bond in aromatic azo compounds to the corresponding amines. This chain is FMN-dependent NADH:quinone oxidoreductase, found in Methylorubrum populi (strain ATCC BAA-705 / NCIMB 13946 / BJ001) (Methylobacterium populi).